Consider the following 63-residue polypeptide: Large ribosomal subunit protein uL29 (63 aa).

It belongs to the universal ribosomal protein uL29 family.

In Haemophilus influenzae (strain 86-028NP), this protein is Large ribosomal subunit protein uL29.